The following is a 148-amino-acid chain: Endothelial differentiation-related factor 1 homolog (148 aa).

Residues Met-1–Gln-26 form a disordered region. The HTH cro/C1-type domain maps to Ile-81–Lys-135. Positions Gln-92 to Ser-111 form a DNA-binding region, H-T-H motif.

The protein localises to the nucleus. In terms of biological role, probable transcriptional coactivator. This chain is Endothelial differentiation-related factor 1 homolog (EDF1), found in Gallus gallus (Chicken).